A 748-amino-acid chain; its full sequence is Polyribonucleotide nucleotidyltransferase (748 aa).

Positions 487 and 493 each coordinate Mg(2+). One can recognise a KH domain in the interval 554 to 613; the sequence is PSTTTIKIDKDKIRDIIGPSGKVIKEICETSGAKIDISDDGTVSVYASDRDKLKVALDKI. In terms of domain architecture, S1 motif spans 623-691; that stretch reads GEIFNGTVVK…NKGKAKLTIK (69 aa). The interval 693–733 is disordered; sequence ADKDKSSNNTKPKTHVNNTKDNSEPEQRRDSSKKRAWNEDN. Positions 699 to 712 are enriched in polar residues; that stretch reads SNNTKPKTHVNNTK. Residues 713 to 722 are compositionally biased toward basic and acidic residues; the sequence is DNSEPEQRRD.

This sequence belongs to the polyribonucleotide nucleotidyltransferase family. Mg(2+) is required as a cofactor.

The protein localises to the cytoplasm. The catalysed reaction is RNA(n+1) + phosphate = RNA(n) + a ribonucleoside 5'-diphosphate. Its function is as follows. Involved in mRNA degradation. Catalyzes the phosphorolysis of single-stranded polyribonucleotides processively in the 3'- to 5'-direction. The polypeptide is Polyribonucleotide nucleotidyltransferase (Rickettsia peacockii (strain Rustic)).